Here is a 201-residue protein sequence, read N- to C-terminus: MLLSDRDIRAEITAGRVRLDPYDEGLIQPSSVDLRLDRAFRVFQNHRYSHIDPAVEQEDLTELVAPEGDEPFVLHPGEFVLGSTLEVVTLPEDLAGRLEGKSSLGRLGLLTHSTAGFIDPGFSGHVTLELSNVATLPIKLWPGMKIGQLCLFRLSTPAEHPYGSAIYGSRYQGQRGPTPSRAYRDFTRAAVPEIPNGSHGA.

Residues 101 to 106, D119, 127 to 129, Q148, Y162, and Q174 contribute to the dCTP site; these read KSSLGR and TLE. E129 (proton donor/acceptor) is an active-site residue.

Belongs to the dCTP deaminase family. In terms of assembly, homotrimer.

It carries out the reaction dCTP + 2 H2O = dUMP + NH4(+) + diphosphate. The protein operates within pyrimidine metabolism; dUMP biosynthesis; dUMP from dCTP: step 1/1. In terms of biological role, bifunctional enzyme that catalyzes both the deamination of dCTP to dUTP and the hydrolysis of dUTP to dUMP without releasing the toxic dUTP intermediate. The protein is dCTP deaminase, dUMP-forming of Parafrankia sp. (strain EAN1pec).